A 177-amino-acid chain; its full sequence is Large ribosomal subunit protein uL6 (177 aa).

This sequence belongs to the universal ribosomal protein uL6 family. In terms of assembly, part of the 50S ribosomal subunit.

Functionally, this protein binds to the 23S rRNA, and is important in its secondary structure. It is located near the subunit interface in the base of the L7/L12 stalk, and near the tRNA binding site of the peptidyltransferase center. The polypeptide is Large ribosomal subunit protein uL6 (Rhodopseudomonas palustris (strain BisA53)).